The chain runs to 146 residues: uncharacterized protein (146 aa).

This is an uncharacterized protein from Saccharomyces cerevisiae (strain ATCC 204508 / S288c) (Baker's yeast).